We begin with the raw amino-acid sequence, 529 residues long: Bifunctional purine biosynthesis protein PurH (529 aa).

Positions 1–148 (MNNARPIRRA…KNHKDTTIIV (148 aa)) constitute an MGS-like domain.

Belongs to the PurH family.

The catalysed reaction is (6R)-10-formyltetrahydrofolate + 5-amino-1-(5-phospho-beta-D-ribosyl)imidazole-4-carboxamide = 5-formamido-1-(5-phospho-D-ribosyl)imidazole-4-carboxamide + (6S)-5,6,7,8-tetrahydrofolate. The enzyme catalyses IMP + H2O = 5-formamido-1-(5-phospho-D-ribosyl)imidazole-4-carboxamide. The protein operates within purine metabolism; IMP biosynthesis via de novo pathway; 5-formamido-1-(5-phospho-D-ribosyl)imidazole-4-carboxamide from 5-amino-1-(5-phospho-D-ribosyl)imidazole-4-carboxamide (10-formyl THF route): step 1/1. Its pathway is purine metabolism; IMP biosynthesis via de novo pathway; IMP from 5-formamido-1-(5-phospho-D-ribosyl)imidazole-4-carboxamide: step 1/1. The chain is Bifunctional purine biosynthesis protein PurH from Shewanella piezotolerans (strain WP3 / JCM 13877).